A 1127-amino-acid polypeptide reads, in one-letter code: Zinc finger protein basonuclin-2 (1127 aa).

The disordered stretch occupies residues 44 to 67 (SEEAEVDVRERDTQRDREPKRARD). The span at 49–67 (VDVRERDTQRDREPKRARD) shows a compositional bias: basic and acidic residues. A Glycyl lysine isopeptide (Lys-Gly) (interchain with G-Cter in SUMO2) cross-link involves residue K305. The disordered stretch occupies residues 386-450 (STQNEYNESS…DLSKTEHPKS (65 aa)). The segment covering 389–400 (NEYNESSESEVS) has biased composition (low complexity). Residues 403–422 (PYKSDQTPNRNALTSITNVE) are compositionally biased toward polar residues. Residues K424, K444, and K449 each participate in a glycyl lysine isopeptide (Lys-Gly) (interchain with G-Cter in SUMO2) cross-link. The segment at 469–492 (VFCNACGKTFYDKGTLKIHYNAVH) adopts a C2H2-type 1 zinc-finger fold. S589 is modified (phosphoserine). K669 participates in a covalent cross-link: Glycyl lysine isopeptide (Lys-Gly) (interchain with G-Cter in SUMO2). Residues 675 to 772 (IDTADEFDDE…EESMEGDEHL (98 aa)) are disordered. Acidic residues predominate over residues 676–689 (DTADEFDDEDDDPN). Composition is skewed to basic and acidic residues over residues 698-708 (MSHDNHCHSQD) and 747-772 (ERDYENESESSEPKLGEESMEGDEHL). A C2H2-type 2 zinc finger spans residues 861-884 (KICYVCKKSFKSSYSVKLHYRNVH). Glycyl lysine isopeptide (Lys-Gly) (interchain with G-Cter in SUMO2) cross-links involve residues K922 and K947. 2 disordered regions span residues 955–976 (LGLDGREDASSPAGTEDSHLNG) and 996–1041 (LQSS…TLPG). The segment covering 1010-1023 (AGSDEGILLDDIDG) has biased composition (acidic residues). 2 C2H2-type zinc fingers span residues 1063-1086 (IMCNICHKMYSNKGTLRVHYKTVH) and 1091-1118 (HKCKVPGCNMMFSSVRSRNRHSQNPNLH). The interval 1107–1127 (SRNRHSQNPNLHKNIPFTSID) is disordered.

In terms of tissue distribution, highly expressed in ovary, testis and kidney. Expressed at moderate levels in skin and small intestine, and at lower levels in lung. Trace amounts of expression detected in liver and colon. Not detected in brain, spleen or thymus.

The protein resides in the nucleus. In terms of biological role, probable transcription factor specific for skin keratinocytes. May play a role in the differentiation of spermatozoa and oocytes. May also play an important role in early urinary-tract development. The protein is Zinc finger protein basonuclin-2 of Mus musculus (Mouse).